Consider the following 67-residue polypeptide: Sec-independent protein translocase protein TatA (67 aa).

Residues 1 to 21 traverse the membrane as a helical segment; that stretch reads MMPGPFELIVILVIVLLLFGG.

It belongs to the TatA/E family. The Tat system comprises two distinct complexes: a TatABC complex, containing multiple copies of TatA, TatB and TatC subunits, and a separate TatA complex, containing only TatA subunits. Substrates initially bind to the TatABC complex, which probably triggers association of the separate TatA complex to form the active translocon.

The protein resides in the cell inner membrane. In terms of biological role, part of the twin-arginine translocation (Tat) system that transports large folded proteins containing a characteristic twin-arginine motif in their signal peptide across membranes. TatA could form the protein-conducting channel of the Tat system. This Ruthia magnifica subsp. Calyptogena magnifica protein is Sec-independent protein translocase protein TatA.